Here is a 220-residue protein sequence, read N- to C-terminus: Charged multivesicular body protein 2a (220 aa).

Residues 12-53 (EEMLRQNQRALNRAMRDLDRERQRLEQQEKKIIADIKKMAKQ) adopt a coiled-coil conformation. The disordered stretch occupies residues 184 to 220 (ATGGSLSVAAGKKAEPQPTLADADADLEERLNNLRRD). Residues 208 to 218 (ADLEERLNNLR) carry the MIT-interacting motif motif. The span at 211-220 (EERLNNLRRD) shows a compositional bias: basic and acidic residues.

Belongs to the SNF7 family. In terms of assembly, probable core component of the endosomal sorting required for transport complex III (ESCRT-III). ESCRT-III components are thought to multimerize to form a flat lattice on the perimeter membrane of the endosome.

The protein localises to the late endosome membrane. The protein resides in the cytoplasm. Functionally, probable core component of the endosomal sorting required for transport complex III (ESCRT-III) which is involved in multivesicular bodies (MVBs) formation and sorting of endosomal cargo proteins into MVBs. MVBs contain intraluminal vesicles (ILVs) that are generated by invagination and scission from the limiting membrane of the endosome and mostly are delivered to lysosomes enabling degradation of membrane proteins, such as stimulated growth factor receptors, lysosomal enzymes and lipids. This is Charged multivesicular body protein 2a (chmp2a) from Danio rerio (Zebrafish).